The sequence spans 107 residues: Nitrogenase-stabilizing/protective protein NifW (107 aa).

Belongs to the NifW family. As to quaternary structure, homotrimer; associates with NifD.

Its function is as follows. May protect the nitrogenase Fe-Mo protein from oxidative damage. The protein is Nitrogenase-stabilizing/protective protein NifW of Gloeothece citriformis (strain PCC 7424) (Cyanothece sp. (strain PCC 7424)).